We begin with the raw amino-acid sequence, 527 residues long: MHDKILILDFGSQVTQLIARRVREANVYSEIHPYDVDASFIRDFAPKGVILSGGPSSVTETDTPRVPQAVFELGVPVLGICYGMQAMAEQLGGKVDIGHLREFGYAEVRARNHTSLLEGISDFTTPEGHGMLKVWMSHGDKVLEMPPGFALMASTESCPIAAMADETRHFYGLQWHPEVTHTVQGRAMLERFVLKICGAQPDWEMGHYIDEAVAKIREQVGQEHVILGLSGGVDSSVAAALLHRAIGDQLTCVFVDHGLLRLNEAEQVMATFADHLGVKVIHVDASEVFLRKLAGVTDPEAKRKIIGAEFVEVFQTEAGKLTDAKWLAQGTIYPDVIESAGKGKKATQTIKSHHNVGGLPETLNLKLLEPLRELFKDEVRELGVKLGLPPAMVYRHPFPGPGLGVRILGEVKRDFADLLRRADAIFIETLRTFIDKETGKSWYDLTSQAFAVFLPVKSVGVMGDGRTYEYVVALRAVQTLDFMTAHWAHLPHELLGHVSNRIINEVRGINRVVYDISGKPPATIEWE.

Residues 4–202 (KILILDFGSQ…VLKICGAQPD (199 aa)) enclose the Glutamine amidotransferase type-1 domain. Residue Cys81 is the Nucleophile of the active site. Residues His176 and Glu178 contribute to the active site. The region spanning 203-395 (WEMGHYIDEA…LGLPPAMVYR (193 aa)) is the GMPS ATP-PPase domain. An ATP-binding site is contributed by 230 to 236 (SGGVDSS).

In terms of assembly, homodimer.

It carries out the reaction XMP + L-glutamine + ATP + H2O = GMP + L-glutamate + AMP + diphosphate + 2 H(+). The protein operates within purine metabolism; GMP biosynthesis; GMP from XMP (L-Gln route): step 1/1. Functionally, catalyzes the synthesis of GMP from XMP. This is GMP synthase [glutamine-hydrolyzing] from Paraburkholderia xenovorans (strain LB400).